Here is a 106-residue protein sequence, read N- to C-terminus: MASGAPPLTQKTPSHARRKERRRPWAAAFGNHAALAPRALLASEQDRGTERHVVRRALLLIACGVVAVRRTHLEARDAYFGAHACAHLSICVHGDSRKQGEEANRV.

The disordered stretch occupies residues 1 to 23 (MASGAPPLTQKTPSHARRKERRR). Basic residues predominate over residues 14–23 (SHARRKERRR).

This is an uncharacterized protein from Treponema pallidum (strain Nichols).